The primary structure comprises 431 residues: Enolase (431 aa).

Gln166 is a binding site for (2R)-2-phosphoglycerate. Glu208 (proton donor) is an active-site residue. Residues Asp245, Glu288, and Asp315 each contribute to the Mg(2+) site. Residues Lys340, Arg369, Ser370, and Lys391 each coordinate (2R)-2-phosphoglycerate. Residue Lys340 is the Proton acceptor of the active site.

Belongs to the enolase family. Requires Mg(2+) as cofactor.

The protein resides in the cytoplasm. The protein localises to the secreted. It localises to the cell surface. It catalyses the reaction (2R)-2-phosphoglycerate = phosphoenolpyruvate + H2O. It functions in the pathway carbohydrate degradation; glycolysis; pyruvate from D-glyceraldehyde 3-phosphate: step 4/5. Its function is as follows. Catalyzes the reversible conversion of 2-phosphoglycerate (2-PG) into phosphoenolpyruvate (PEP). It is essential for the degradation of carbohydrates via glycolysis. This Clostridium botulinum (strain Loch Maree / Type A3) protein is Enolase.